A 438-amino-acid polypeptide reads, in one-letter code: Adenosylhomocysteinase (438 aa).

Threonine 64, aspartate 139, and glutamate 164 together coordinate substrate. 165 to 167 (TTT) serves as a coordination point for NAD(+). Substrate-binding residues include lysine 194 and aspartate 198. NAD(+) is bound by residues asparagine 199, 228–233 (GYGDVG), glutamate 251, asparagine 286, 307–309 (IGH), and asparagine 352.

It belongs to the adenosylhomocysteinase family. NAD(+) is required as a cofactor.

The protein localises to the cytoplasm. The catalysed reaction is S-adenosyl-L-homocysteine + H2O = L-homocysteine + adenosine. It functions in the pathway amino-acid biosynthesis; L-homocysteine biosynthesis; L-homocysteine from S-adenosyl-L-homocysteine: step 1/1. Functionally, may play a key role in the regulation of the intracellular concentration of adenosylhomocysteine. The sequence is that of Adenosylhomocysteinase from Coxiella burnetii (strain CbuK_Q154) (Coxiella burnetii (strain Q154)).